Consider the following 200-residue polypeptide: Holliday junction branch migration complex subunit RuvA (200 aa).

Positions 1–64 (MIGHLRGIIV…EDAHTLYGFH (64 aa)) are domain I. The segment at 65–143 (NDHERRLFRA…RWHTNDTPSP (79 aa)) is domain II. Residues 133–152 (SRWHTNDTPSPEGLRSSNTQ) are disordered. Residues 144-148 (EGLRS) form a flexible linker region. The tract at residues 149–200 (SNTQPTQDAISALMALGYKPQEAKRAIDAIQKPDLSAETLIRLALKQMVLGT) is domain III.

It belongs to the RuvA family. As to quaternary structure, homotetramer. Forms an RuvA(8)-RuvB(12)-Holliday junction (HJ) complex. HJ DNA is sandwiched between 2 RuvA tetramers; dsDNA enters through RuvA and exits via RuvB. An RuvB hexamer assembles on each DNA strand where it exits the tetramer. Each RuvB hexamer is contacted by two RuvA subunits (via domain III) on 2 adjacent RuvB subunits; this complex drives branch migration. In the full resolvosome a probable DNA-RuvA(4)-RuvB(12)-RuvC(2) complex forms which resolves the HJ.

Its subcellular location is the cytoplasm. The RuvA-RuvB-RuvC complex processes Holliday junction (HJ) DNA during genetic recombination and DNA repair, while the RuvA-RuvB complex plays an important role in the rescue of blocked DNA replication forks via replication fork reversal (RFR). RuvA specifically binds to HJ cruciform DNA, conferring on it an open structure. The RuvB hexamer acts as an ATP-dependent pump, pulling dsDNA into and through the RuvAB complex. HJ branch migration allows RuvC to scan DNA until it finds its consensus sequence, where it cleaves and resolves the cruciform DNA. This is Holliday junction branch migration complex subunit RuvA from Coxiella burnetii (strain Dugway 5J108-111).